Here is an 848-residue protein sequence, read N- to C-terminus: ATP-dependent RNA helicase dbp10 (848 aa).

Residues 22–43 (DIATDNQKDKHENVGENVSDED) are disordered. The Q motif motif lies at 69 to 97 (SNFQSMGLNQTLLRAIFKKGFKAPTPIQR). The Helicase ATP-binding domain maps to 100 to 272 (IPLLLEGRDV…KAGLQDPVLV (173 aa)). 113-120 (ARTGSGKT) lines the ATP pocket. The DEAD box signature appears at 220-223 (DEAD). In terms of domain architecture, Helicase C-terminal spans 330–480 (RKRALELALK…TSSKQVKTDS (151 aa)). The segment at 610-650 (NKVKPKGIKSEVASDKITDSSPGNMSEASESELEEVFKNPK) is disordered. Residues 617-627 (IKSEVASDKIT) are compositionally biased toward basic and acidic residues. Positions 628–637 (DSSPGNMSEA) are enriched in polar residues. 3 positions are modified to phosphoserine: S638, S733, and S736. The tract at residues 768 to 813 (ANDSPIRENKRYKHNKLQTPKPADKFRDNYHKQNKRNREAKERGIG) is disordered. The span at 789 to 812 (PADKFRDNYHKQNKRNREAKERGI) shows a compositional bias: basic and acidic residues.

The protein belongs to the DEAD box helicase family. DDX54/DBP10 subfamily.

Its subcellular location is the nucleus. The protein resides in the nucleolus. It carries out the reaction ATP + H2O = ADP + phosphate + H(+). ATP-binding RNA helicase involved in the biogenesis of 60S ribosomal subunits and is required for the normal formation of 25S and 5.8S rRNAs. This chain is ATP-dependent RNA helicase dbp10 (dbp10), found in Schizosaccharomyces pombe (strain 972 / ATCC 24843) (Fission yeast).